A 226-amino-acid polypeptide reads, in one-letter code: MKFKAIVIDIDGTITCENRELHLGAVKKIRILKVPVVLATGNILCYARTASKLIGLDGAVIAENGGAVTVRYDLNGTFEESLEECEKAFSFLSEYFKLTKLDPFYRKTEIALRRDFNLEKARTLLETQPFDVEMVDTKYAVHIKSTRINKGSGLRKLAEIMGLEAEDFVAIGDSENDIEMFEAAGFGIAVANGDERIKEAANYVTEASYGDGAVEAIEFLESNGWI.

The active-site Nucleophile is Asp9. Mg(2+) contacts are provided by Asp9 and Asp11. Position 150 (Lys150) interacts with substrate. 2 residues coordinate Mg(2+): Asp173 and Asp177.

Belongs to the archaeal SPP-like hydrolase family. Mg(2+) serves as cofactor.

The enzyme catalyses 2-phosphoglycolate + H2O = glycolate + phosphate. Functionally, catalyzes the dephosphorylation of 2-phosphoglycolate. The sequence is that of Phosphoglycolate phosphatase from Methanosarcina acetivorans (strain ATCC 35395 / DSM 2834 / JCM 12185 / C2A).